The following is a 281-amino-acid chain: 4-deoxy-L-threo-5-hexosulose-uronate ketol-isomerase (281 aa).

4 residues coordinate Zn(2+): histidine 198, histidine 200, glutamate 205, and histidine 248.

It belongs to the KduI family. Zn(2+) serves as cofactor.

It carries out the reaction 5-dehydro-4-deoxy-D-glucuronate = 3-deoxy-D-glycero-2,5-hexodiulosonate. Its pathway is glycan metabolism; pectin degradation; 2-dehydro-3-deoxy-D-gluconate from pectin: step 4/5. Catalyzes the isomerization of 5-dehydro-4-deoxy-D-glucuronate to 3-deoxy-D-glycero-2,5-hexodiulosonate. This is 4-deoxy-L-threo-5-hexosulose-uronate ketol-isomerase from Lacticaseibacillus paracasei (strain ATCC 334 / BCRC 17002 / CCUG 31169 / CIP 107868 / KCTC 3260 / NRRL B-441) (Lactobacillus paracasei).